We begin with the raw amino-acid sequence, 256 residues long: Mannose-specific lectin 1 (256 aa).

The N-terminal stretch at 1-23 (MAKLLLFLLPAILGLLVPRSAVA) is a signal peptide. Bulb-type lectin domains follow at residues 26 to 131 (TNYL…PWVR) and 145 to 252 (NNLL…SKRS). Residues 51–55 (QDDCN), Y59, W63, Q64, 170–174 (QGDCN), Y178, and 182–185 (YGWQ) each bind beta-D-mannose. A Carbohydrate-binding motif 1 motif is present at residues 51–59 (QDDCNLVLY). 2 disulfide bridges follow: C54–C74 and C173–C195. The short motif at 170–178 (QGDCNLVLY) is the Carbohydrate-binding motif 2 element.

In terms of assembly, forms heterodimers.

It localises to the secreted. In terms of biological role, mannose-specific lectin. Shows agglutinating activity towards erythrocytes from rabbit. The protein is Mannose-specific lectin 1 of Remusatia vivipara (Hitchhiker elephant ear).